The following is a 156-amino-acid chain: Small ribosomal subunit protein uS7 (156 aa).

Belongs to the universal ribosomal protein uS7 family. As to quaternary structure, part of the 30S ribosomal subunit. Contacts proteins S9 and S11.

Its function is as follows. One of the primary rRNA binding proteins, it binds directly to 16S rRNA where it nucleates assembly of the head domain of the 30S subunit. Is located at the subunit interface close to the decoding center, probably blocks exit of the E-site tRNA. This is Small ribosomal subunit protein uS7 from Shewanella frigidimarina (strain NCIMB 400).